Consider the following 217-residue polypeptide: Membrane-spanning 4-domains subfamily A member 6C (217 aa).

The segment covering 1-20 has biased composition (polar residues); sequence MIPQVVTNETITTISPNGIN. The disordered stretch occupies residues 1 to 33; it reads MIPQVVTNETITTISPNGINFPQKDESQPTQQR. Residues 1 to 46 are Cytoplasmic-facing; sequence MIPQVVTNETITTISPNGINFPQKDESQPTQQRQDSLKKHLKAEIK. Residues 47-67 traverse the membrane as a helical segment; that stretch reads VIVAIQIMCAVTVLALGIILA. Residues 68–84 lie on the Extracellular side of the membrane; it reads SVPPVPYFNSVFSVLLK. A helical membrane pass occupies residues 85–105; that stretch reads SGYPFIGALFFIASGILSIIT. Residues 106-121 lie on the Cytoplasmic side of the membrane; it reads ERKSTKPLVDASLTLN. The chain crosses the membrane as a helical span at residues 122–142; that stretch reads ILSVSFAFVGIIIISVSLAGL. The Extracellular portion of the chain corresponds to 143–186; sequence HPASEQCKQSKELSLIEHDYYQPFYNSDRSECAVTKSILTGALS. Residues 187 to 207 traverse the membrane as a helical segment; that stretch reads VMLIISVLELGLALLSAMLWL. Topologically, residues 208–217 are cytoplasmic; it reads REGVLTSLRM.

The protein belongs to the MS4A family. As to expression, expressed only by thymus, spleen, peripheral lymph node and bone marrow.

The protein localises to the membrane. May be involved in signal transduction as a component of a multimeric receptor complex. In Mus musculus (Mouse), this protein is Membrane-spanning 4-domains subfamily A member 6C (Ms4a6c).